Reading from the N-terminus, the 495-residue chain is Chromosomal replication initiator protein DnaA (495 aa).

Residues 1–83 (MSVALWQQCL…KVQLTVGSRR (83 aa)) form a domain I, interacts with DnaA modulators region. The domain II stretch occupies residues 83-158 (RNVAMSSPRD…QVEGSLKHQS (76 aa)). Residues 86-127 (AMSSPRDLGAPVSATTMNASRPTEAPAVHAAPRAKGDYADEQ) form a disordered region. Residues 159-375 (GLNPNFTFET…GALKKVIADS (217 aa)) are domain III, AAA+ region. ATP contacts are provided by Gly-203, Gly-205, Lys-206, and Thr-207. Residues 376–495 (HFMGKPITQD…YKNLLRLLTS (120 aa)) are domain IV, binds dsDNA.

This sequence belongs to the DnaA family. As to quaternary structure, oligomerizes as a right-handed, spiral filament on DNA at oriC.

It localises to the cytoplasm. In terms of biological role, plays an essential role in the initiation and regulation of chromosomal replication. ATP-DnaA binds to the origin of replication (oriC) to initiate formation of the DNA replication initiation complex once per cell cycle. Binds the DnaA box (a 9 base pair repeat at the origin) and separates the double-stranded (ds)DNA. Forms a right-handed helical filament on oriC DNA; dsDNA binds to the exterior of the filament while single-stranded (ss)DNA is stabiized in the filament's interior. The ATP-DnaA-oriC complex binds and stabilizes one strand of the AT-rich DNA unwinding element (DUE), permitting loading of DNA polymerase. After initiation quickly degrades to an ADP-DnaA complex that is not apt for DNA replication. Binds acidic phospholipids. The chain is Chromosomal replication initiator protein DnaA from Chromohalobacter salexigens (strain ATCC BAA-138 / DSM 3043 / CIP 106854 / NCIMB 13768 / 1H11).